Consider the following 94-residue polypeptide: Integration host factor subunit beta (94 aa).

The protein belongs to the bacterial histone-like protein family. Heterodimer of an alpha and a beta chain.

This protein is one of the two subunits of integration host factor, a specific DNA-binding protein that functions in genetic recombination as well as in transcriptional and translational control. This Escherichia coli (strain UTI89 / UPEC) protein is Integration host factor subunit beta.